The chain runs to 233 residues: PEP2-like protein NECHADRAFT_97050 (233 aa).

The protein belongs to the PEP2 family.

Functionally, may contribute to the ability of the fungus to cause disease on pea plants. This chain is PEP2-like protein NECHADRAFT_97050, found in Fusarium vanettenii (strain ATCC MYA-4622 / CBS 123669 / FGSC 9596 / NRRL 45880 / 77-13-4) (Fusarium solani subsp. pisi).